The chain runs to 104 residues: Large ribosomal subunit protein uL24 (104 aa).

It belongs to the universal ribosomal protein uL24 family. Part of the 50S ribosomal subunit.

Its function is as follows. One of two assembly initiator proteins, it binds directly to the 5'-end of the 23S rRNA, where it nucleates assembly of the 50S subunit. Functionally, one of the proteins that surrounds the polypeptide exit tunnel on the outside of the subunit. In Clostridium beijerinckii (strain ATCC 51743 / NCIMB 8052) (Clostridium acetobutylicum), this protein is Large ribosomal subunit protein uL24.